A 116-amino-acid polypeptide reads, in one-letter code: Somatostatin (116 aa).

A signal peptide spans 1–24 (MLSCRLQCALALLSIALAVGTVSA). Residues 25–88 (APSDPRLRQF…QDEVRLELER (64 aa)) constitute a propeptide that is removed on maturation. The interval 60-82 (PSQTENEALESEDLSRGAEQDEV) is disordered. Residues 72-82 (DLSRGAEQDEV) are compositionally biased toward basic and acidic residues. Cys105 and Cys116 are oxidised to a cystine.

Belongs to the somatostatin family.

It localises to the secreted. Functionally, somatostatin inhibits the release of somatotropin. This chain is Somatostatin (SST), found in Gallus gallus (Chicken).